Consider the following 527-residue polypeptide: Neutrophil cytosol factor 2 (527 aa).

3 TPR repeats span residues 37 to 70 (SRIC…DKHL), 71 to 104 (AVSY…LRGN), and 121 to 154 (CEVL…KSEP). The residue at position 233 (threonine 233) is a Phosphothreonine. The SH3 1 domain maps to 240–299 (LEGEAHRVLFGFVPETPEELQVMPGNIVFVLKKGNDNWATVMFNGQKGLVPCNYLEPVEL). Residues 304–345 (QQQPQEETSLESDIPAPPSSSAPGRPQLSPGQKGKEEPKQEI) are disordered. Serine 324 bears the Phosphoserine mark. Positions 336–345 (KGKEEPKQEI) are enriched in basic and acidic residues. The region spanning 352–430 (SYTLKVHYKY…YCLTLWCENT (79 aa)) is the PB1 domain. Serine 400 carries the phosphoserine modification. The tract at residues 434–457 (QGFPDEPEESKKSDANNQTTEPEL) is disordered. One can recognise an SH3 2 domain in the interval 458–517 (KEGSKVVALFSYEATQPEDLEFLEGDVILVISTVNEQWLEGECKGKVGIFPKAFVEQHPT).

Belongs to the NCF2/NOXA1 family. As to quaternary structure, component of the phagocyte NADPH oxidase complex composed of an obligatory core heterodimer formed by the membrane proteins CYBA and CYBB and the cytosolic regulatory subunits NCF1/p47-phox, NCF2/p67-phox, NCF4/p40-phox and the small GTPase RAC1 or RAC2. Part of a cytosolic complex composed at least by NCF1, NCF2 and NCF4. Interacts with NCF4. Interacts (via the C-terminal SH3 domain) with NCF1 (via C-terminus). Interacts with SYTL1 and RAC1. May interact with NOXO1. Interacts with S100A8 and calprotectin (S100A8/9). Interacts with GBP7 (via GB1/RHD3-type G domain). Interacts with CYBB; the interaction is enhanced in the presence of GBP7.

The protein localises to the cytoplasm. Its function is as follows. Subunit of the phagocyte NADPH oxidase complex that mediates the transfer of electrons from cytosolic NADPH to O2 to produce the superoxide anion (O2(-)). In the activated complex, electrons are first transferred from NADPH to flavin adenine dinucleotide (FAD) and subsequently transferred via two heme molecules to molecular oxygen, producing superoxide through an outer-sphere reaction. Activation of the NADPH oxidase complex is initiated by the assembly of cytosolic subunits of the NADPH oxidase complex with the core NADPH oxidase complex to form a complex at the plasma membrane or phagosomal membrane. This activation process is initiated by phosphorylation dependent binding of the cytosolic NCF1/p47-phox subunit to the C-terminus of CYBA/p22-phox. In Bos taurus (Bovine), this protein is Neutrophil cytosol factor 2.